The following is a 331-amino-acid chain: Taste receptor type 2 member 38 (331 aa).

The Extracellular segment spans residues 1–17 (MLTLTPVLTVSYEAKIS). Residues 18 to 38 (FLFLSVVEFAVGIMANAFIVL) traverse the membrane as a helical segment. Residues 39–54 (VNFWDMVKKQPLNNCD) are Cytoplasmic-facing. Residues 55-75 (IALLCLSITRLFLQGLLLLDA) form a helical membrane-spanning segment. The Extracellular portion of the chain corresponds to 76–94 (IQLACFQQMKDPLSHNYQA). The helical transmembrane segment at 95-115 (ILTLWMSANQVSLWLAACLSL) threads the bilayer. The Cytoplasmic portion of the chain corresponds to 116–142 (LYCAKIVRFSHTFPLHLASWVSRRFLQ). A helical transmembrane segment spans residues 143–163 (MLLVALLFSGVCTALCLWDFF). At 164 to 198 (SRSHTVVTSMLHMNNTEFNLQIEKLNFFYSFVFCN) the chain is on the extracellular side. N-linked (GlcNAc...) asparagine glycosylation is present at Asn-177. Residues 199 to 219 (VGSVPPSLVFLISSGVLVISL) traverse the membrane as a helical segment. Residues 220–243 (GNHMRTMKSQTRGSRDPSLEAHVR) lie on the Cytoplasmic side of the membrane. Residues 244-264 (AIIFLVSFLCFYVVSFCAALI) form a helical membrane-spanning segment. Topologically, residues 265–276 (SIPLLVLWHNKG) are extracellular. A helical membrane pass occupies residues 277–297 (GVMVCIGMMAACPSGHAAILI). Topologically, residues 298–331 (SGNAKLKKVIVTILFWFQSRQKVRRVHKVLPRIL) are cytoplasmic.

This sequence belongs to the G-protein coupled receptor T2R family. In terms of tissue distribution, expressed in tongue, stomach and duodenum.

It is found in the membrane. Its function is as follows. Putative taste receptor which may play a role in the perception of bitterness. The sequence is that of Taste receptor type 2 member 38 (Tas2r38) from Rattus norvegicus (Rat).